A 389-amino-acid polypeptide reads, in one-letter code: Alpha-(1,3)-fucosyltransferase 7 (389 aa).

The Cytoplasmic segment spans residues 1-55; sequence MPTPCPPACLSTPGTHRLLPFPDWKAPSWESRKEATCNSSSPGPWAEPTVQGYHP. Residues 56–78 traverse the membrane as a helical; Signal-anchor for type II membrane protein segment; that stretch reads TRRLRAWGGLAGGATFMVIWFFW. Over 79-389 the chain is Lumenal; it reads LWGSAPGSAP…YEDLESWFQA (311 aa). Residues cysteine 115 and cysteine 123 are joined by a disulfide bond. N-linked (GlcNAc...) asparagine glycosylation occurs at asparagine 128. Cysteine 258 and cysteine 261 are oxidised to a cystine. An N-linked (GlcNAc...) asparagine glycan is attached at asparagine 338. Cysteine 365 and cysteine 368 are disulfide-bonded.

The protein belongs to the glycosyltransferase 10 family. Post-translationally, N-glycosylated. As to expression, highly expressed in lung and bone marrow and to a much lesser extent in spleen, salivary gland and skeletal muscle.

The protein resides in the golgi apparatus. Its subcellular location is the golgi stack membrane. The catalysed reaction is an N-acetyl-alpha-neuraminyl-(2-&gt;3)-beta-D-galactosyl-(1-&gt;4)-N-acetyl-beta-D-glucosaminyl derivative + GDP-beta-L-fucose = an alpha-Neu5Ac-(2-&gt;3)-beta-D-Gal-(1-&gt;4)-[alpha-L-Fuc-(1-&gt;3)]-beta-D-GlcNAc derivative + GDP + H(+). It catalyses the reaction an alpha-Neu5Ac-(2-&gt;3)-beta-D-Gal-(1-&gt;4)-beta-D-GlcNAc6S derivative + GDP-beta-L-fucose = an alpha-Neu5Ac-(2-&gt;3)-beta-D-Gal-(1-&gt;4)-[alpha-L-Fuc-(1-&gt;3)]-beta-D-GlcNAc6S derivative + GDP + H(+). The enzyme catalyses a neolactoside IV(3)-alpha-NeuAc-nLc4Cer + GDP-beta-L-fucose = a neolactoside IV(3)-alpha-NeuNAc,III(3)-alpha-Fuc-nLc4Cer + GDP + H(+). It carries out the reaction a neolactoside VI(3)-alpha-NeuNAc-nLc6Cer + GDP-beta-L-fucose = a neolactoside VI(3)-alpha-NeuAc,V(3)-alphaFuc-nLc6Cer + GDP + H(+). The catalysed reaction is an alpha-Neu5Ac-(2-&gt;3)-beta-D-Gal-(1-&gt;4)-beta-D-GlcNAc-(1-&gt;3)-beta-D-Gal-(1-&gt;4)-[alpha-L-Fuc-(1-&gt;3)]-beta-D-GlcNAc derivative + GDP-beta-L-fucose = an alpha-Neu5Ac-(2-&gt;3)-beta-D-Gal-(1-&gt;4)-[alpha-L-Fuc-(1-&gt;3)]-beta-D-GlcNAc-(1-&gt;3)-beta-D-Gal-(1-&gt;4)-[alpha-L-Fuc-(1-&gt;3)]-beta-D-GlcNAc derivative + GDP + H(+). It catalyses the reaction alpha-Neu5Ac-(2-&gt;3)-beta-D-Gal-(1-&gt;4)-beta-D-GlcNAc-(1-&gt;3)-beta-D-Gal-(1-&gt;4)-D-Glc + GDP-beta-L-fucose = alpha-Neu5Ac-(2-&gt;3)-beta-D-Gal-(1-&gt;4)-[alpha-L-Fuc-(1-&gt;3)]-beta-D-GlcNAc-(1-&gt;3)-beta-D-Gal-(1-&gt;4)-D-Glc + GDP + H(+). The enzyme catalyses alpha-Neu5Ac-(2-&gt;3)-beta-D-Gal-(1-&gt;4)-beta-D-GlcNAc-(1-&gt;3)-beta-D-Gal-(1-&gt;4)-[alpha-L-Fuc-(1-&gt;3)]-beta-D-GlcNAc-(1-&gt;3)-beta-D-Gal-(1-&gt;4)-beta-D-GlcNAc + GDP-beta-L-fucose = alpha-Neu5Ac-(2-&gt;3)-beta-D-Gal-(1-&gt;4)-[alpha-L-Fuc-(1-&gt;3)]-beta-D-GlcNAc-(1-&gt;3)-beta-D-Gal-(1-&gt;4)-[alpha-L-Fuc-(1-&gt;3)]-beta-D-GlcNAc-(1-&gt;3)-beta-D-Gal-(1-&gt;4)-beta-D-GlcNAc + GDP + H(+). It carries out the reaction alpha-Neu5Ac-(2-&gt;3)-beta-D-Gal-(1-&gt;4)-beta-D-GlcNAc-(1-&gt;3)-beta-D-Gal-(1-&gt;4)-beta-D-GlcNAc-(1-&gt;3)-beta-D-Gal-(1-&gt;4)-beta-D-GlcNAc + GDP-beta-L-fucose = alpha-Neu5Ac-(2-&gt;3)-beta-D-Gal-(1-&gt;4)-[alpha-L-Fuc-(1-&gt;3)]-beta-D-GlcNAc-(1-&gt;3)-beta-D-Gal-(1-&gt;4)-beta-D-GlcNAc-(1-&gt;3)-beta-D-Gal-(1-&gt;4)-beta-D-GlcNAc + GDP + H(+). The protein operates within protein modification; protein glycosylation. Inhibited by NaCl. Inhibited by GDP in a concentration dependent manner, with an IC(50) value of 93 uM. Also inhibited by GMP and GTP. Inhibited by N-ethylmaleimide. Activated by poly(ethylene glycol) by enhancing the thermal stability of FUT7. Activated by Mn2+, Ca2+, and Mg2+. Both panosialin A and B inhibit activity with IC(50) values of 4.8 and 5.3 ug/ml, respectively. Inhibited by gallic acid (GA) and (-)-epigallocatechin gallate (EGCG) in a time-dependent and irreversible manner with IC(50) values of 60 and 700 nM, respectively. Its function is as follows. Catalyzes the transfer of L-fucose, from a guanosine diphosphate-beta-L-fucose, to the N-acetyl glucosamine (GlcNAc) of a distal alpha2,3 sialylated lactosamine unit of a glycoprotein or a glycolipid-linked sialopolylactosamines chain through an alpha-1,3 glycosidic linkage and participates in the final fucosylation step in the biosynthesis of the sialyl Lewis X (sLe(x)), a carbohydrate involved in cell and matrix adhesion during leukocyte trafficking and fertilization. In vitro, also synthesizes sialyl-dimeric-Lex structures, from VIM-2 structures and both di-fucosylated and trifucosylated structures from mono-fucosylated precursors. However does not catalyze alpha 1-3 fucosylation when an internal alpha 1-3 fucosylation is present in polylactosamine chain and the fucosylation rate of the internal GlcNAc residues is reduced once fucose has been added to the distal GlcNAc. Also catalyzes the transfer of a fucose from GDP-beta-fucose to the 6-sulfated a(2,3)sialylated substrate to produce 6-sulfo sLex mediating significant L-selectin-dependent cell adhesion. Through sialyl-Lewis(x) biosynthesis, can control SELE- and SELP-mediated cell adhesion with leukocytes and allows leukocytes tethering and rolling along the endothelial tissue thereby enabling the leukocytes to accumulate at a site of inflammation. May enhance embryo implantation through sialyl Lewis X (sLeX)-mediated adhesion of embryo cells to endometrium. May affect insulin signaling by up-regulating the phosphorylation and expression of some signaling molecules involved in the insulin-signaling pathway through SLe(x) which is present on the glycans of the INSRR alpha subunit. This chain is Alpha-(1,3)-fucosyltransferase 7, found in Mus musculus (Mouse).